Reading from the N-terminus, the 283-residue chain is Non-selective voltage-gated ion channel VDAC1 (283 aa).

The residue at position 2 (Ala-2) is an N-acetylalanine. Lys-12 is a binding site for ATP. Residue Lys-12 forms a Glycyl lysine isopeptide (Lys-Gly) (interchain with G-Cter in ubiquitin) linkage. Residue Ser-13 is modified to Phosphoserine. Phosphothreonine is present on Thr-19. Lys-20 is an ATP binding site. Position 20 is an N6-acetyllysine; alternate (Lys-20). Lys-20 is subject to N6-succinyllysine; alternate. Residue Lys-20 forms a Glycyl lysine isopeptide (Lys-Gly) (interchain with G-Cter in ubiquitin); alternate linkage. 2 consecutive transmembrane segments (beta stranded) span residues Leu-26 to Ser-35 and Leu-39 to Ala-47. Glycyl lysine isopeptide (Lys-Gly) (interchain with G-Cter in ubiquitin) cross-links involve residues Lys-53 and Lys-61. Residues Val-54–Trp-64 traverse the membrane as a beta stranded segment. At Tyr-67 the chain carries Phosphotyrosine. 3 consecutive transmembrane segments (beta stranded) span residues Leu-69 to Asn-76, Thr-80 to Asp-89, and Leu-95 to Ser-104. Thr-107 is modified (phosphothreonine). Lys-109 carries the post-translational modification N6-acetyllysine; alternate. Residue Lys-109 forms a Glycyl lysine isopeptide (Lys-Gly) (interchain with G-Cter in ubiquitin); alternate linkage. Lys-110 participates in a covalent cross-link: Glycyl lysine isopeptide (Lys-Gly) (interchain with G-Cter in ubiquitin). The next 4 membrane-spanning stretches (beta stranded) occupy residues Asn-111 to Arg-120, Ile-123 to Asp-130, Ser-137 to Gly-145, and Leu-150 to Glu-158. Residue Ser-137 is modified to Phosphoserine. Residue Lys-161 forms a Glycyl lysine isopeptide (Lys-Gly) (interchain with G-Cter in ubiquitin) linkage. 6 consecutive transmembrane segments (beta stranded) span residues Arg-163–Thr-175, Phe-178–Asn-185, Glu-189–Val-198, Leu-202–Thr-211, Arg-218–Val-227, and Ala-231–Asn-238. Ser-193 carries the post-translational modification Phosphoserine; by NEK1. A Phosphoserine modification is found at Ser-240. Leu-242 to Gly-244 contributes to the NAD(+) binding site. The beta stranded transmembrane segment at Leu-242–Leu-251 threads the bilayer. At Lys-252 the chain carries N6-acetyllysine. The chain crosses the membrane as a beta stranded span at residues Gly-254–Leu-263. Ser-260 to Asp-264 serves as a coordination point for NAD(+). At Lys-266 the chain carries N6-acetyllysine; alternate. Residue Lys-266 forms a Glycyl lysine isopeptide (Lys-Gly) (interchain with G-Cter in ubiquitin); alternate linkage. A beta stranded membrane pass occupies residues His-273–Gln-282. Residue Lys-274 forms a Glycyl lysine isopeptide (Lys-Gly) (interchain with G-Cter in ubiquitin) linkage.

Belongs to the eukaryotic mitochondrial porin family. Homodimer and homotrimer; in response to cyclic AMP or calcium; oligomerization is required for scramblase activity. Component of the mitochondrial permeability transition pore complex (mPTPC), at least composed of SPG7, VDAC1 and PPIF. Interacts with SPG7, NIPSNAP2 and SLC25A30. Interacts with hexokinases including HK1. The HK1-VDAC1 complex interacts with ATF2. Interacts with BCL2L1. Interacts with BAK1. Interacts with RTL10/BOP (via BH3 domain). Interacts with amyloid-beta and APP; induces VDAC1 dephosphorylation. Interacts with TMEM41B. Interacts with BCAP31. Interacts with HSPA9; this interaction couples ITPR1 to VDAC1. In terms of processing, phosphorylation at Ser-193 by NEK1 promotes the closed conformational state preventing excessive mitochondrial membrane permeability and subsequent apoptotic cell death after injury. Phosphorylation by the AKT-GSK3B axis stabilizes the protein probably by preventing ubiquitin-mediated proteasomal degradation. Post-translationally, ubiquitinated. Undergoes monoubiquitination and polyubiquitination by PRKN; monoubiquitination at Lys-274 inhibits apoptosis, whereas polyubiquitination leads to its degradation and promotes mitophagy. Deubiquitinated by USP30. As to expression, widely expressed. High levels in heart and kidney with lower levels in brain and ascitic tumor. Very low levels in liver.

The protein resides in the mitochondrion outer membrane. It is found in the cell membrane. The protein localises to the membrane raft. The catalysed reaction is Ca(2+)(in) = Ca(2+)(out). It catalyses the reaction Na(+)(in) = Na(+)(out). The enzyme catalyses chloride(in) = chloride(out). It carries out the reaction Mg(2+)(in) = Mg(2+)(out). The catalysed reaction is K(+)(in) = K(+)(out). It catalyses the reaction ATP(in) = ATP(out). The enzyme catalyses L-glutamate(out) = L-glutamate(in). It carries out the reaction dopamine(out) = dopamine(in). The catalysed reaction is acetylcholine(in) = acetylcholine(out). It catalyses the reaction Fe(III)-[cytochrome c](out) = Fe(III)-[cytochrome c](in). The enzyme catalyses a 1,2-diacyl-sn-glycero-3-phosphocholine(in) = a 1,2-diacyl-sn-glycero-3-phosphocholine(out). It carries out the reaction a 1,2-diacyl-sn-glycero-3-phospho-L-serine(in) = a 1,2-diacyl-sn-glycero-3-phospho-L-serine(out). Inhibited by nitric oxide. Voltage-gated ion channel activity is inhibited by lanthanum(3+) and ruthenium red. Mitochondrial calcium transport is inhibited by lanthanum(3+), ruthenium red and Ru360. Its function is as follows. Non-selective voltage-gated ion channel that mediates the transport of anions and cations through the mitochondrion outer membrane and plasma membrane. The channel at the outer mitochondrial membrane allows diffusion of small hydrophilic molecules; in the plasma membrane it is involved in cell volume regulation and apoptosis. It adopts an open conformation at low or zero membrane potential and a closed conformation at potentials above 30-40 mV. The open state has a weak anion selectivity whereas the closed state is cation-selective. Binds various signaling molecules, including the sphingolipid ceramide, the phospholipid phosphatidylcholine, and the sterols cholesterol and oxysterol. In depolarized mitochondria, acts downstream of PRKN and PINK1 to promote mitophagy or prevent apoptosis; polyubiquitination by PRKN promotes mitophagy, while monoubiquitination by PRKN decreases mitochondrial calcium influx which ultimately inhibits apoptosis. May participate in the formation of the permeability transition pore complex (PTPC) responsible for the release of mitochondrial products that triggers apoptosis. May mediate ATP export from cells. Part of a complex composed of HSPA9, ITPR1 and VDAC1 that regulates mitochondrial calcium-dependent apoptosis by facilitating calcium transport from the ER lumen to the mitochondria intermembrane space thus providing calcium for the downstream calcium channel MCU that directly releases it into mitochondria matrix. Catalyzes the scrambling of phospholipids across the outer mitochondrial membrane; the mechanism is unrelated to channel activity and is capable of translocating both anionic and zwitterionic phospholipids. The polypeptide is Non-selective voltage-gated ion channel VDAC1 (Rattus norvegicus (Rat)).